The following is a 114-amino-acid chain: UPF0342 protein SE_1526 (114 aa).

It belongs to the UPF0342 family.

This Staphylococcus epidermidis (strain ATCC 12228 / FDA PCI 1200) protein is UPF0342 protein SE_1526.